Reading from the N-terminus, the 1778-residue chain is Protein TIC 214 (1778 aa).

The next 6 membrane-spanning stretches (helical) occupy residues 18–38 (IINSVVVVGLYYGFLTTFSIG), 67–87 (FIAGQLMMFISIYYAPLHLAL), 90–110 (PHTITVLALPYLLFHFFWNNN), 132–152 (VFLNNLIFQLFNHFILPSSML), 175–195 (VGWLIGHILFMKWVGLVLVWI), and 226–246 (IFSILLFITCVYYLGRIPSPI). The disordered stretch occupies residues 1498-1520 (GQGELESDNEKKRNPESALSNQE).

This sequence belongs to the TIC214 family. In terms of assembly, part of the Tic complex.

Its subcellular location is the plastid. The protein localises to the chloroplast inner membrane. Functionally, involved in protein precursor import into chloroplasts. May be part of an intermediate translocation complex acting as a protein-conducting channel at the inner envelope. The protein is Protein TIC 214 of Arabis hirsuta (Hairy rock-cress).